Consider the following 159-residue polypeptide: Transcriptional repressor NrdR (159 aa).

A zinc finger spans residues 3 to 34 (CPFCGSDNTSVKDSRAAEDDTAVRRRRVCESC). The ATP-cone domain maps to 49–139 (IIVVKRDGKR…VYRDFKDPSD (91 aa)).

Belongs to the NrdR family. The cofactor is Zn(2+).

Its function is as follows. Negatively regulates transcription of bacterial ribonucleotide reductase nrd genes and operons by binding to NrdR-boxes. The polypeptide is Transcriptional repressor NrdR (Hyphomonas neptunium (strain ATCC 15444)).